Here is a 502-residue protein sequence, read N- to C-terminus: Bifunctional purine biosynthesis protein PurH (502 aa).

Positions 1–144 (MKKRALISVF…KNFQDVVVIS (144 aa)) constitute an MGS-like domain.

Belongs to the PurH family.

The enzyme catalyses (6R)-10-formyltetrahydrofolate + 5-amino-1-(5-phospho-beta-D-ribosyl)imidazole-4-carboxamide = 5-formamido-1-(5-phospho-D-ribosyl)imidazole-4-carboxamide + (6S)-5,6,7,8-tetrahydrofolate. It carries out the reaction IMP + H2O = 5-formamido-1-(5-phospho-D-ribosyl)imidazole-4-carboxamide. It participates in purine metabolism; IMP biosynthesis via de novo pathway; 5-formamido-1-(5-phospho-D-ribosyl)imidazole-4-carboxamide from 5-amino-1-(5-phospho-D-ribosyl)imidazole-4-carboxamide (10-formyl THF route): step 1/1. Its pathway is purine metabolism; IMP biosynthesis via de novo pathway; IMP from 5-formamido-1-(5-phospho-D-ribosyl)imidazole-4-carboxamide: step 1/1. This Clostridium beijerinckii (strain ATCC 51743 / NCIMB 8052) (Clostridium acetobutylicum) protein is Bifunctional purine biosynthesis protein PurH.